Consider the following 492-residue polypeptide: MYIVQIASECAPVIKAGGLGDVVYGLSRELEIRGNCVELILPKYDCMRYDHIWGLHEAYLNLWVPWFGAAIHCTVYCGWVHGRVCFFIEPHSEDNFFNRGCYYGCDDDDMRFAFFSKAALEFLHQSNKRPDIIHCHDWQTGLVPVMLYEIYKYHGMDTQRVCYTIHNFKHQGIGGVKTLWATGLNREAYYFQNDKLQDDFNPFALNYMKGGIVYSNAVTTVSPNHALEAQYTDVGCGLGHTLYQHKDKFSGILNGIDYDFWNPEIDRYIPYNYNQEDFEQKLYNKKALRERLLLQAADKPIIAYIGRLDNQKGVHLVHHAIYHSLNKGAQFVLLGSATEAGINAHFRHEKQFLNNNPDVHLELGFNEELSHLIYAGADMIVVPSNYEPCGLTQMIGLKYGTVPIVRGVGGLVNTVFDRDYDQNLPPEKRNGYVFYQSDNQALESAMNRAIDLWYQSPEKFQQLAIQGMKYDYSWNNPGKEYLDIYEWIKYKW.

Lysine 15 is a binding site for ADP-alpha-D-glucose.

Belongs to the glycosyltransferase 1 family. Bacterial/plant glycogen synthase subfamily.

It carries out the reaction [(1-&gt;4)-alpha-D-glucosyl](n) + ADP-alpha-D-glucose = [(1-&gt;4)-alpha-D-glucosyl](n+1) + ADP + H(+). The protein operates within glycan biosynthesis; glycogen biosynthesis. Synthesizes alpha-1,4-glucan chains using ADP-glucose. The protein is Glycogen synthase 1 of Trichormus variabilis (strain ATCC 29413 / PCC 7937) (Anabaena variabilis).